The chain runs to 520 residues: Cholesterol side-chain cleavage enzyme, mitochondrial (520 aa).

The N-terminal 39 residues, 1–39 (MLARGLALRSVLVKGCQPFLSAPRECPGHPRVGTGEGAC), are a transit peptide targeting the mitochondrion. Residue Cys-461 participates in heme binding.

It belongs to the cytochrome P450 family. In terms of assembly, interacts with FDX1/adrenodoxin. Heme is required as a cofactor.

Its subcellular location is the mitochondrion inner membrane. The enzyme catalyses 6 reduced [adrenodoxin] + cholesterol + 3 O2 + 6 H(+) = 4-methylpentanal + pregnenolone + 6 oxidized [adrenodoxin] + 4 H2O. The catalysed reaction is 2 reduced [adrenodoxin] + cholesterol + O2 + 2 H(+) = (22R)-hydroxycholesterol + 2 oxidized [adrenodoxin] + H2O. It catalyses the reaction (22R)-hydroxycholesterol + 2 reduced [adrenodoxin] + O2 + 2 H(+) = (20R,22R)-20,22-dihydroxycholesterol + 2 oxidized [adrenodoxin] + H2O. It carries out the reaction (20R,22R)-20,22-dihydroxycholesterol + 2 reduced [adrenodoxin] + O2 + 2 H(+) = 4-methylpentanal + pregnenolone + 2 oxidized [adrenodoxin] + 2 H2O. Its pathway is lipid metabolism; C21-steroid hormone metabolism. It participates in steroid metabolism; cholesterol metabolism. A cytochrome P450 monooxygenase that catalyzes the side-chain hydroxylation and cleavage of cholesterol to pregnenolone, the precursor of most steroid hormones. Catalyzes three sequential oxidation reactions of cholesterol, namely the hydroxylation at C22 followed with the hydroxylation at C20 to yield 20R,22R-hydroxycholesterol that is further cleaved between C20 and C22 to yield the C21-steroid pregnenolone and 4-methylpentanal. Mechanistically, uses molecular oxygen inserting one oxygen atom into a substrate and reducing the second into a water molecule. Two electrons are provided by NADPH via a two-protein mitochondrial transfer system comprising flavoprotein FDXR (adrenodoxin/ferredoxin reductase) and nonheme iron-sulfur protein FDX1 or FDX2 (adrenodoxin/ferredoxin). The sequence is that of Cholesterol side-chain cleavage enzyme, mitochondrial (CYP11A1) from Sus scrofa (Pig).